We begin with the raw amino-acid sequence, 290 residues long: ADP-dependent (S)-NAD(P)H-hydrate dehydratase (290 aa).

Positions 5–278 constitute a YjeF C-terminal domain; that stretch reads NQTLLEKVII…RYLPKIMKII (274 aa). Alanine 40, glycine 103, and histidine 152 together coordinate (6S)-NADPHX. Glycine 218 serves as a coordination point for AMP. Residue aspartate 219 participates in (6S)-NADPHX binding.

Belongs to the NnrD/CARKD family. Homotetramer. Mg(2+) is required as a cofactor.

It catalyses the reaction (6S)-NADHX + ADP = AMP + phosphate + NADH + H(+). The catalysed reaction is (6S)-NADPHX + ADP = AMP + phosphate + NADPH + H(+). Its function is as follows. Catalyzes the dehydration of the S-form of NAD(P)HX at the expense of ADP, which is converted to AMP. Together with NAD(P)HX epimerase, which catalyzes the epimerization of the S- and R-forms, the enzyme allows the repair of both epimers of NAD(P)HX, a damaged form of NAD(P)H that is a result of enzymatic or heat-dependent hydration. This Streptococcus pneumoniae (strain ATCC BAA-255 / R6) protein is ADP-dependent (S)-NAD(P)H-hydrate dehydratase.